The sequence spans 750 residues: Photosystem I P700 chlorophyll a apoprotein A1 (750 aa).

8 helical membrane passes run 70–93, 156–179, 195–219, 291–309, 346–369, 385–411, 433–455, and 531–549; these read VFSA…FHGA, LYCT…FHYH, LNHH…HVSL, IAHH…GHMY, WHAQ…HHMY, LSLF…IFMV, AIIS…LYIH, and FLVH…LILL. [4Fe-4S] cluster-binding residues include cysteine 573 and cysteine 582. Helical transmembrane passes span 589-610 and 664-686; these read HVFL…HFSW and LSAY…MFLF. Histidine 675 lines the chlorophyll a' pocket. 2 residues coordinate chlorophyll a: methionine 683 and tyrosine 691. Tryptophan 692 contacts phylloquinone. The helical transmembrane segment at 724–744 threads the bilayer; sequence AVGVTHYLLGGIATTWAFFLA.

Belongs to the PsaA/PsaB family. As to quaternary structure, the PsaA/B heterodimer binds the P700 chlorophyll special pair and subsequent electron acceptors. PSI consists of a core antenna complex that captures photons, and an electron transfer chain that converts photonic excitation into a charge separation. The eukaryotic PSI reaction center is composed of at least 11 subunits. P700 is a chlorophyll a/chlorophyll a' dimer, A0 is one or more chlorophyll a, A1 is one or both phylloquinones and FX is a shared 4Fe-4S iron-sulfur center. is required as a cofactor.

The protein resides in the plastid. The protein localises to the chloroplast thylakoid membrane. The enzyme catalyses reduced [plastocyanin] + hnu + oxidized [2Fe-2S]-[ferredoxin] = oxidized [plastocyanin] + reduced [2Fe-2S]-[ferredoxin]. In terms of biological role, psaA and PsaB bind P700, the primary electron donor of photosystem I (PSI), as well as the electron acceptors A0, A1 and FX. PSI is a plastocyanin-ferredoxin oxidoreductase, converting photonic excitation into a charge separation, which transfers an electron from the donor P700 chlorophyll pair to the spectroscopically characterized acceptors A0, A1, FX, FA and FB in turn. Oxidized P700 is reduced on the lumenal side of the thylakoid membrane by plastocyanin. The sequence is that of Photosystem I P700 chlorophyll a apoprotein A1 from Calycanthus floridus var. glaucus (Eastern sweetshrub).